Consider the following 77-residue polypeptide: Tachyplesin-2 (77 aa).

An N-terminal signal peptide occupies residues 1 to 23 (MKKLVIALCLMMVLAVMVEEAEA). Cystine bridges form between Cys26-Cys39 and Cys30-Cys35. Position 40 is an arginine amide (Arg40). Positions 41-77 (GKRNEVRQYRDRGYDVRAIPDETFFTRQDEDEDDDEE) are excised as a propeptide.

The protein belongs to the tachyplesin/polyphemusin family. In terms of tissue distribution, hemocytes.

Its subcellular location is the secreted. Its function is as follows. Significantly inhibits the growth of Gram-negative and Gram-positive bacteria. In Tachypleus tridentatus (Japanese horseshoe crab), this protein is Tachyplesin-2.